A 235-amino-acid polypeptide reads, in one-letter code: MLTLLAILAVSYIIGSIPTSLVAGKLLKGIDIRNFGSGNAGGTNAFRVLGWKPGLVVTLIDIVKGVVAAVSVVAFFRHHPIGAFPDMNEVALRLLAGMSAVIGHVFTLFAGFKGGKGVSTAAGMLIGIAPVSMLMVVGIFLLTVYISRHVSVASMLAAIAFPLIIAIRKYIFELGSGLDYYIGLFGSPISFHDSLDYHLMIFGLIVALAILYTHRTNIRRLISGTESRVTFGKKH.

Helical transmembrane passes span Leu4–Gly24, Val56–Phe76, Leu94–Gly114, Ala122–Leu142, Val152–Phe172, and Phe191–Leu211.

The protein belongs to the PlsY family. As to quaternary structure, probably interacts with PlsX.

The protein resides in the cell inner membrane. It catalyses the reaction an acyl phosphate + sn-glycerol 3-phosphate = a 1-acyl-sn-glycero-3-phosphate + phosphate. It functions in the pathway lipid metabolism; phospholipid metabolism. Its function is as follows. Catalyzes the transfer of an acyl group from acyl-phosphate (acyl-PO(4)) to glycerol-3-phosphate (G3P) to form lysophosphatidic acid (LPA). This enzyme utilizes acyl-phosphate as fatty acyl donor, but not acyl-CoA or acyl-ACP. This chain is Glycerol-3-phosphate acyltransferase, found in Pelodictyon phaeoclathratiforme (strain DSM 5477 / BU-1).